The primary structure comprises 686 residues: DNA gyrase subunit B (686 aa).

The segment covering 1–27 (MADSGNPNENNPSTDTGVNDAVSTSHG) has biased composition (polar residues). The disordered stretch occupies residues 1 to 29 (MADSGNPNENNPSTDTGVNDAVSTSHGDA). The region spanning 465–579 (CEIFIVEGDS…SGHVYLSRPP (115 aa)) is the Toprim domain. Mg(2+)-binding residues include E471, D544, and D546.

This sequence belongs to the type II topoisomerase GyrB family. As to quaternary structure, heterotetramer, composed of two GyrA and two GyrB chains. In the heterotetramer, GyrA contains the active site tyrosine that forms a transient covalent intermediate with DNA, while GyrB binds cofactors and catalyzes ATP hydrolysis. Mg(2+) is required as a cofactor. The cofactor is Mn(2+). Requires Ca(2+) as cofactor.

The protein localises to the cytoplasm. The enzyme catalyses ATP-dependent breakage, passage and rejoining of double-stranded DNA.. Its function is as follows. A type II topoisomerase that negatively supercoils closed circular double-stranded (ds) DNA in an ATP-dependent manner to modulate DNA topology and maintain chromosomes in an underwound state. Negative supercoiling favors strand separation, and DNA replication, transcription, recombination and repair, all of which involve strand separation. Also able to catalyze the interconversion of other topological isomers of dsDNA rings, including catenanes and knotted rings. Type II topoisomerases break and join 2 DNA strands simultaneously in an ATP-dependent manner. The protein is DNA gyrase subunit B of Streptomyces coelicolor (strain ATCC BAA-471 / A3(2) / M145).